The chain runs to 273 residues: Shikimate dehydrogenase (NADP(+)) (273 aa).

Shikimate contacts are provided by residues 14–16 (SKS) and T61. The Proton acceptor role is filled by K65. Residues N86 and D102 each contribute to the shikimate site. Residues 126–130 (GAGGA), 150–155 (NRTHAK), and M213 contribute to the NADP(+) site. Residue Y215 coordinates shikimate. An NADP(+)-binding site is contributed by G237.

Belongs to the shikimate dehydrogenase family. As to quaternary structure, homodimer.

It carries out the reaction shikimate + NADP(+) = 3-dehydroshikimate + NADPH + H(+). Its pathway is metabolic intermediate biosynthesis; chorismate biosynthesis; chorismate from D-erythrose 4-phosphate and phosphoenolpyruvate: step 4/7. Functionally, involved in the biosynthesis of the chorismate, which leads to the biosynthesis of aromatic amino acids. Catalyzes the reversible NADPH linked reduction of 3-dehydroshikimate (DHSA) to yield shikimate (SA). The sequence is that of Shikimate dehydrogenase (NADP(+)) from Aeromonas salmonicida (strain A449).